The chain runs to 57 residues: Potassium channel toxin alpha-KTx 8.2 (57 aa).

Positions 1 to 28 (MSRLYAIILIALVFNVVMTITPDMKVEA) are cleaved as a signal peptide. 3 disulfides stabilise this stretch: Cys31–Cys47, Cys34–Cys52, and Cys38–Cys54.

This sequence belongs to the short scorpion toxin superfamily. Potassium channel inhibitor family. Alpha-KTx 08 subfamily. As to expression, expressed by the venom gland.

It is found in the secreted. Its function is as follows. This toxin inhibits rKv1.1/KCNA1 (100% inhibition at 3 uM), Kv1.3/KCNA3 (human, mouse and rat) (IC(50)=269-467 nM), shaker IR (60% at 3 uM) and activates the mouse capsaicin receptor TRPV1 (EC(50)=132 uM, at 20 degrees Celsius), a non-selective cation channel expressed by sensory neurons of the pain pathway. In vivo, intraplantar injection of this toxin in WT mice hind paw shows significant acute pain, whereas no pain is observed when the toxin is injected into TRPV1 KO mice. In addition, subcutaneous injection into mice (185 mg) produces an excitation of the animal, but no lethality, whereas injection into cockroaches does not provoke lethality as well. This chain is Potassium channel toxin alpha-KTx 8.2, found in Olivierus martensii (Manchurian scorpion).